Here is a 40-residue protein sequence, read N- to C-terminus: MSLRKSKYEVLERLEVGLRIVSLALVVAKTLVELVDTTLI.

This is an uncharacterized protein from Myxococcus xanthus (strain DK1622).